The sequence spans 397 residues: Succinyl-diaminopimelate desuccinylase (397 aa).

A Zn(2+)-binding site is contributed by His73. Asp75 is an active-site residue. Residue Asp106 coordinates Zn(2+). The active-site Proton acceptor is the Glu140. Positions 141, 169, and 366 each coordinate Zn(2+).

It belongs to the peptidase M20A family. DapE subfamily. Homodimer. Zn(2+) serves as cofactor. Requires Co(2+) as cofactor.

The catalysed reaction is N-succinyl-(2S,6S)-2,6-diaminopimelate + H2O = (2S,6S)-2,6-diaminopimelate + succinate. The protein operates within amino-acid biosynthesis; L-lysine biosynthesis via DAP pathway; LL-2,6-diaminopimelate from (S)-tetrahydrodipicolinate (succinylase route): step 3/3. Its function is as follows. Catalyzes the hydrolysis of N-succinyl-L,L-diaminopimelic acid (SDAP), forming succinate and LL-2,6-diaminopimelate (DAP), an intermediate involved in the bacterial biosynthesis of lysine and meso-diaminopimelic acid, an essential component of bacterial cell walls. This Sinorhizobium medicae (strain WSM419) (Ensifer medicae) protein is Succinyl-diaminopimelate desuccinylase.